The chain runs to 71 residues: MLKRILISIIRFYQRFISPIKVRPTCRFYPTCSQYAIEAVTKYGCVKGTFLALKRILKCHPFHPGGFDPIK.

The protein belongs to the UPF0161 family.

The protein resides in the cell membrane. Could be involved in insertion of integral membrane proteins into the membrane. This chain is Putative membrane protein insertion efficiency factor, found in Ruminiclostridium cellulolyticum (strain ATCC 35319 / DSM 5812 / JCM 6584 / H10) (Clostridium cellulolyticum).